We begin with the raw amino-acid sequence, 159 residues long: Transcriptional repressor NrdR (159 aa).

The segment at 3-34 (CPTCQNTDSRVLESRSADTGKSVRRRRECLNC) is a zinc-finger region. The ATP-cone domain occupies 49–139 (ISVIKKDGSR…VYRKFNGVKD (91 aa)).

It belongs to the NrdR family. Requires Zn(2+) as cofactor.

Its function is as follows. Negatively regulates transcription of bacterial ribonucleotide reductase nrd genes and operons by binding to NrdR-boxes. The chain is Transcriptional repressor NrdR from Prochlorococcus marinus subsp. pastoris (strain CCMP1986 / NIES-2087 / MED4).